Reading from the N-terminus, the 159-residue chain is Phosphopantetheine adenylyltransferase (159 aa).

Thr-9 is a substrate binding site. ATP-binding positions include 9 to 10 (TF) and His-17. Substrate-binding residues include Lys-41, Leu-73, and Arg-87. ATP contacts are provided by residues 88–90 (GLR), Glu-98, and 123–129 (YAFLSST).

It belongs to the bacterial CoaD family. Homohexamer. Requires Mg(2+) as cofactor.

Its subcellular location is the cytoplasm. It carries out the reaction (R)-4'-phosphopantetheine + ATP + H(+) = 3'-dephospho-CoA + diphosphate. The protein operates within cofactor biosynthesis; coenzyme A biosynthesis; CoA from (R)-pantothenate: step 4/5. Its function is as follows. Reversibly transfers an adenylyl group from ATP to 4'-phosphopantetheine, yielding dephospho-CoA (dPCoA) and pyrophosphate. The polypeptide is Phosphopantetheine adenylyltransferase (Vibrio campbellii (strain ATCC BAA-1116)).